The sequence spans 360 residues: Phospho-N-acetylmuramoyl-pentapeptide-transferase (360 aa).

Transmembrane regions (helical) follow at residues 27 to 47 (GALFTAGFFVFWFGPWIISLL), 70 to 90 (GTPTMGGLMILAGAVVSILLW), 98 to 118 (VWVTLAVTLGFGAIGFYDDYL), 134 to 154 (LLLEFAIAGAACLLISIYSPA), 168 to 188 (ALLNLGWFWVPFAAFVIVGAG), 199 to 219 (GLAIVPVMIACGTFGVIAYLV), 239 to 259 (LAVVCGAVIGAGLGFLWFNAP), 263 to 283 (IFMGDTGSLALGGLLGAIAVA), 288 to 308 (IVLAIVGGLFVLEIMSVIIQV), and 337 to 357 (QVVIRFWIIAVILALVGLATL).

This sequence belongs to the glycosyltransferase 4 family. MraY subfamily. Requires Mg(2+) as cofactor.

It localises to the cell inner membrane. The catalysed reaction is UDP-N-acetyl-alpha-D-muramoyl-L-alanyl-gamma-D-glutamyl-meso-2,6-diaminopimeloyl-D-alanyl-D-alanine + di-trans,octa-cis-undecaprenyl phosphate = di-trans,octa-cis-undecaprenyl diphospho-N-acetyl-alpha-D-muramoyl-L-alanyl-D-glutamyl-meso-2,6-diaminopimeloyl-D-alanyl-D-alanine + UMP. It functions in the pathway cell wall biogenesis; peptidoglycan biosynthesis. In terms of biological role, catalyzes the initial step of the lipid cycle reactions in the biosynthesis of the cell wall peptidoglycan: transfers peptidoglycan precursor phospho-MurNAc-pentapeptide from UDP-MurNAc-pentapeptide onto the lipid carrier undecaprenyl phosphate, yielding undecaprenyl-pyrophosphoryl-MurNAc-pentapeptide, known as lipid I. In Methylorubrum populi (strain ATCC BAA-705 / NCIMB 13946 / BJ001) (Methylobacterium populi), this protein is Phospho-N-acetylmuramoyl-pentapeptide-transferase.